A 419-amino-acid chain; its full sequence is UDP-N-acetylglucosamine 1-carboxyvinyltransferase (419 aa).

22–23 is a phosphoenolpyruvate binding site; sequence KN. Position 92 (arginine 92) interacts with UDP-N-acetyl-alpha-D-glucosamine. The active-site Proton donor is cysteine 116. Position 116 is a 2-(S-cysteinyl)pyruvic acid O-phosphothioketal (cysteine 116). UDP-N-acetyl-alpha-D-glucosamine is bound by residues 121-125, aspartate 307, and leucine 329; that span reads RPIDL.

This sequence belongs to the EPSP synthase family. MurA subfamily.

The protein localises to the cytoplasm. It carries out the reaction phosphoenolpyruvate + UDP-N-acetyl-alpha-D-glucosamine = UDP-N-acetyl-3-O-(1-carboxyvinyl)-alpha-D-glucosamine + phosphate. Its pathway is cell wall biogenesis; peptidoglycan biosynthesis. Cell wall formation. Adds enolpyruvyl to UDP-N-acetylglucosamine. This is UDP-N-acetylglucosamine 1-carboxyvinyltransferase from Campylobacter fetus subsp. fetus (strain 82-40).